Consider the following 270-residue polypeptide: MVKVAVTGALGRMGSGIIKTITETDGLDVVAAIDIPNHPKKGQDIGELTGLGKIGVSLSTSDELEAILKESGAEVLVDFTAAAPCVNTAKTAAKLGVNLVIGTTGFTPEQRAEMENAISENKVAATISQNYAVGVNIFFKTLELLAQKLGDYDIEILEMHHKFKKDAPSGTALRAAEIIQNNLNRDSNIIYGREGITGERTKEEICIHALRGGDIVGDHTVIFTTDGERLELSHRVTSRQSLVSGAIRAIQFVADKKEGIYNTFDVLDLN.

NAD(+) is bound by residues 8-13 (GALGRM), Asp34, 102-104 (GTT), and 128-131 (SQNY). Residue His160 is the Proton donor/acceptor of the active site. Residue His161 coordinates (S)-2,3,4,5-tetrahydrodipicolinate. The Proton donor role is filled by Lys164. 170 to 171 (GT) is a (S)-2,3,4,5-tetrahydrodipicolinate binding site.

It belongs to the DapB family.

It is found in the cytoplasm. The catalysed reaction is (S)-2,3,4,5-tetrahydrodipicolinate + NAD(+) + H2O = (2S,4S)-4-hydroxy-2,3,4,5-tetrahydrodipicolinate + NADH + H(+). It carries out the reaction (S)-2,3,4,5-tetrahydrodipicolinate + NADP(+) + H2O = (2S,4S)-4-hydroxy-2,3,4,5-tetrahydrodipicolinate + NADPH + H(+). It functions in the pathway amino-acid biosynthesis; L-lysine biosynthesis via DAP pathway; (S)-tetrahydrodipicolinate from L-aspartate: step 4/4. Functionally, catalyzes the conversion of 4-hydroxy-tetrahydrodipicolinate (HTPA) to tetrahydrodipicolinate. This is 4-hydroxy-tetrahydrodipicolinate reductase from Methanococcus maripaludis (strain C7 / ATCC BAA-1331).